The primary structure comprises 275 residues: Biotin synthase (275 aa).

Residues 1–217 (MLCAICNVSS…DTAKTLPQCR (217 aa)) enclose the Radical SAM core domain. [4Fe-4S] cluster-binding residues include C13, C17, and C20. Residues C57, C92, C150, and R217 each contribute to the [2Fe-2S] cluster site.

This sequence belongs to the radical SAM superfamily. Biotin synthase family. In terms of assembly, homodimer. [4Fe-4S] cluster is required as a cofactor. It depends on [2Fe-2S] cluster as a cofactor.

It catalyses the reaction (4R,5S)-dethiobiotin + (sulfur carrier)-SH + 2 reduced [2Fe-2S]-[ferredoxin] + 2 S-adenosyl-L-methionine = (sulfur carrier)-H + biotin + 2 5'-deoxyadenosine + 2 L-methionine + 2 oxidized [2Fe-2S]-[ferredoxin]. The protein operates within cofactor biosynthesis; biotin biosynthesis; biotin from 7,8-diaminononanoate: step 2/2. Its function is as follows. Catalyzes the conversion of dethiobiotin (DTB) to biotin by the insertion of a sulfur atom into dethiobiotin via a radical-based mechanism. The sequence is that of Biotin synthase from Campylobacter fetus subsp. fetus (strain 82-40).